The primary structure comprises 101 residues: MILEHVLVLSAYLFLIGLYGLIMSRNMVRALMCLELILNAVNMNFVTFSDFFDNSQLKGDIFCIFVIAIAAAEAAIGLAIVSSIYRNRKSTRINQSTLLNK.

3 helical membrane-spanning segments follow: residues 2 to 22 (ILEH…YGLI), 32 to 52 (MCLE…SDFF), and 61 to 81 (IFCI…LAIV).

The protein belongs to the complex I subunit 4L family. In terms of assembly, NDH is composed of at least 16 different subunits, 5 of which are encoded in the nucleus.

It localises to the plastid. It is found in the chloroplast thylakoid membrane. The catalysed reaction is a plastoquinone + NADH + (n+1) H(+)(in) = a plastoquinol + NAD(+) + n H(+)(out). It carries out the reaction a plastoquinone + NADPH + (n+1) H(+)(in) = a plastoquinol + NADP(+) + n H(+)(out). Its function is as follows. NDH shuttles electrons from NAD(P)H:plastoquinone, via FMN and iron-sulfur (Fe-S) centers, to quinones in the photosynthetic chain and possibly in a chloroplast respiratory chain. The immediate electron acceptor for the enzyme in this species is believed to be plastoquinone. Couples the redox reaction to proton translocation, and thus conserves the redox energy in a proton gradient. The polypeptide is NAD(P)H-quinone oxidoreductase subunit 4L, chloroplastic (Olimarabidopsis pumila (Dwarf rocket)).